We begin with the raw amino-acid sequence, 480 residues long: Histone-lysine N-methyltransferase ASHR1 (480 aa).

In terms of domain architecture, SET spans 11-248 (RCLGVSNLPQ…KDSEITISYI (238 aa)). Zn(2+) contacts are provided by Cys-56, Cys-59, Cys-68, Cys-71, Cys-77, Cys-81, His-89, and Cys-93. The segment at 56–93 (CDGCFKTNNLKKCSACQVVWYCGSSCQKSEWKLHRDEC) adopts an MYND-type zinc-finger fold.

The protein belongs to the class V-like SAM-binding methyltransferase superfamily. Histone-lysine methyltransferase family. SET2 subfamily.

The protein resides in the nucleus. It is found in the chromosome. It catalyses the reaction L-lysyl-[histone] + S-adenosyl-L-methionine = N(6)-methyl-L-lysyl-[histone] + S-adenosyl-L-homocysteine + H(+). Its function is as follows. Histone methyltransferase. In Arabidopsis thaliana (Mouse-ear cress), this protein is Histone-lysine N-methyltransferase ASHR1 (ASHR1).